The primary structure comprises 247 residues: MNIIPCSIKTLKGLYDISGVEVGQHFYWQIGGFQIHAQVLITSWVVITILLGSVVIAVRNPQTIPTDGQNFFEYVLEFIRDLSKTQIGEEYGPWVPFIGTMFLFIFVSNWSGALLPWKIIELPHGELAAPTNDINTTVALALLTSAAYFYAGLSKKGLSYFEKYIKPTPILLPINILEDFTKPLSLSFRLFGNILADELVVVVLVSLVPLVVPIPVMFLGLFTSGIQALIFATLAAAYIGESMEGHH.

A run of 5 helical transmembrane segments spans residues 38–58 (QVLI…VIAV), 95–115 (VPFI…GALL), 134–154 (INTT…AGLS), 199–219 (LVVV…VMFL), and 220–240 (GLFT…AYIG).

Belongs to the ATPase A chain family. As to quaternary structure, F-type ATPases have 2 components, CF(1) - the catalytic core - and CF(0) - the membrane proton channel. CF(1) has five subunits: alpha(3), beta(3), gamma(1), delta(1), epsilon(1). CF(0) has four main subunits: a, b, b' and c.

Its subcellular location is the plastid. It is found in the chloroplast thylakoid membrane. Functionally, key component of the proton channel; it plays a direct role in the translocation of protons across the membrane. In Agrostis stolonifera (Creeping bentgrass), this protein is ATP synthase subunit a, chloroplastic.